The sequence spans 506 residues: Transcription factor CP2 (506 aa).

In terms of domain architecture, Grh/CP2 DB spans 61–300 (ENKILPFQYV…SPGFNSSHNS (240 aa)). The segment at 133–395 (EHQQLEGWRW…LFNALKGRIV (263 aa)) is DNA-binding. 2 disordered regions span residues 238–268 (FKPK…YQPS) and 291–316 (SPGF…QPEP). Over residues 241–265 (KGADRKQKTDREKMEKRTPQEKEKY) the composition is skewed to basic and acidic residues. Residues 291 to 300 (SPGFNSSHNS) show a composition bias toward polar residues.

It belongs to the grh/CP2 family. CP2 subfamily. Component of the SSP (stage selector protein) complex, which appears to be a heteromer of TFCP2 and 2 copies of NFE4.

It is found in the nucleus. Functionally, may function as a transcription factor. This is Transcription factor CP2 (tfcp2) from Xenopus laevis (African clawed frog).